The sequence spans 186 residues: Elongation factor P (186 aa).

This sequence belongs to the elongation factor P family.

The protein localises to the cytoplasm. The protein operates within protein biosynthesis; polypeptide chain elongation. Functionally, involved in peptide bond synthesis. Stimulates efficient translation and peptide-bond synthesis on native or reconstituted 70S ribosomes in vitro. Probably functions indirectly by altering the affinity of the ribosome for aminoacyl-tRNA, thus increasing their reactivity as acceptors for peptidyl transferase. This is Elongation factor P from Polynucleobacter necessarius subsp. necessarius (strain STIR1).